Consider the following 300-residue polypeptide: uncharacterized protein (300 aa).

S49 (charge relay system) is an active-site residue. The Proton donor role is filled by Y137. The active-site Schiff-base intermediate with substrate is the K165.

The protein belongs to the DapA family. As to quaternary structure, homotetramer.

Its subcellular location is the cytoplasm. In terms of biological role, upon expression in E.coli complements a dapA deletion mutation, but this may not be its physiological function. This is an uncharacterized protein from Rhizobium meliloti (Ensifer meliloti).